A 538-amino-acid chain; its full sequence is Cryptic outer membrane porin BglH (538 aa).

The signal sequence occupies residues 1–25 (MFRRNLITSAILLMAPLAFSAQSLA). Positions 52–82 (KDEEKKKYTPATVNRSVSTNDQGYAANPFPT) are disordered. The segment covering 62 to 73 (ATVNRSVSTNDQ) has biased composition (polar residues).

It belongs to the porin LamB (TC 1.B.3) family. Homomonomer; no physical evidence of a homotrimer has been found, however conductance experiments suggest it may be a homotrimer. The monomer probably consists of 18 antiparallel beta-strands.

Its subcellular location is the cell outer membrane. Its function is as follows. Part of a cryptic operon that is poorly expressed in vivo. May be an ancestral sugar porin with a broad carbohydrate specificity; it binds aromatic beta-D-glucosides such as arbutin and salicin, but with low affinity compared to the binding of maltooligosaccharides to the LamB porin. The polypeptide is Cryptic outer membrane porin BglH (bglH) (Escherichia coli (strain K12)).